The following is a 151-amino-acid chain: MKIVIQRVKQAQVSIENQIHNKISSGLLLLVGVGPDDGPDDLDYAVRKIVHMRIFSDQEGKMNLSVKDIEGEILSISQFTLHADTKKGNRPAFVKAAPPELASRLYDEFNQLLAQEVPTKMGIFGADMQVELINDGPVTIILDTKNRREEV.

The Gly-cisPro motif, important for rejection of L-amino acids signature appears at 136–137; that stretch reads GP.

This sequence belongs to the DTD family. In terms of assembly, homodimer.

The protein resides in the cytoplasm. The catalysed reaction is glycyl-tRNA(Ala) + H2O = tRNA(Ala) + glycine + H(+). It carries out the reaction a D-aminoacyl-tRNA + H2O = a tRNA + a D-alpha-amino acid + H(+). In terms of biological role, an aminoacyl-tRNA editing enzyme that deacylates mischarged D-aminoacyl-tRNAs. Also deacylates mischarged glycyl-tRNA(Ala), protecting cells against glycine mischarging by AlaRS. Acts via tRNA-based rather than protein-based catalysis; rejects L-amino acids rather than detecting D-amino acids in the active site. By recycling D-aminoacyl-tRNA to D-amino acids and free tRNA molecules, this enzyme counteracts the toxicity associated with the formation of D-aminoacyl-tRNA entities in vivo and helps enforce protein L-homochirality. This is D-aminoacyl-tRNA deacylase from Streptococcus gordonii (strain Challis / ATCC 35105 / BCRC 15272 / CH1 / DL1 / V288).